A 681-amino-acid chain; its full sequence is Potassium-transporting ATPase ATP-binding subunit (681 aa).

Helical transmembrane passes span 30–50 (LLVYVGAILATSLYFLGFFGI), 59–79 (LAIALILWFTVLFANFAEAIA), 216–236 (ILLVTLSIIFLAVSATLLPFT), and 255–275 (IALLVCLAPTTIGALLSSIGI). Aspartate 306 acts as the 4-aspartylphosphate intermediate in catalysis. Residues aspartate 343, glutamate 347, 376 to 383 (FTATTRMS), and lysine 394 contribute to the ATP site. The Mg(2+) site is built by aspartate 517 and aspartate 521. 3 consecutive transmembrane segments (helical) span residues 587–607 (FAIIPVLFYGIFPQLEALNLM), 615–635 (AILSAIIYNALIIIFLIPLSL), and 661–681 (LVAPFIAIKLIDMLLTVLGIV).

This sequence belongs to the cation transport ATPase (P-type) (TC 3.A.3) family. Type IA subfamily. As to quaternary structure, the system is composed of three essential subunits: KdpA, KdpB and KdpC.

Its subcellular location is the cell membrane. The catalysed reaction is K(+)(out) + ATP + H2O = K(+)(in) + ADP + phosphate + H(+). In terms of biological role, part of the high-affinity ATP-driven potassium transport (or Kdp) system, which catalyzes the hydrolysis of ATP coupled with the electrogenic transport of potassium into the cytoplasm. This subunit is responsible for energy coupling to the transport system and for the release of the potassium ions to the cytoplasm. This is Potassium-transporting ATPase ATP-binding subunit from Listeria welshimeri serovar 6b (strain ATCC 35897 / DSM 20650 / CCUG 15529 / CIP 8149 / NCTC 11857 / SLCC 5334 / V8).